The primary structure comprises 216 residues: 2-hydroxy-3-keto-5-methylthiopentenyl-1-phosphate phosphatase (216 aa).

The protein belongs to the HAD-like hydrolase superfamily. MtnX family.

It catalyses the reaction 2-hydroxy-5-methylsulfanyl-3-oxopent-1-enyl phosphate + H2O = 1,2-dihydroxy-5-(methylsulfanyl)pent-1-en-3-one + phosphate. It functions in the pathway amino-acid biosynthesis; L-methionine biosynthesis via salvage pathway; L-methionine from S-methyl-5-thio-alpha-D-ribose 1-phosphate: step 4/6. Dephosphorylates 2-hydroxy-3-keto-5-methylthiopentenyl-1-phosphate (HK-MTPenyl-1-P) yielding 1,2-dihydroxy-3-keto-5-methylthiopentene (DHK-MTPene). This Exiguobacterium sp. (strain ATCC BAA-1283 / AT1b) protein is 2-hydroxy-3-keto-5-methylthiopentenyl-1-phosphate phosphatase.